The following is a 326-amino-acid chain: Ribose-phosphate pyrophosphokinase (326 aa).

Residues 45–47 (NGE) and 104–105 (RQ) each bind ATP. Residues His-138 and Asp-178 each contribute to the Mg(2+) site. Lys-202 is an active-site residue. D-ribose 5-phosphate-binding positions include Arg-204, Asp-230, and 234–238 (DTGGT).

Belongs to the ribose-phosphate pyrophosphokinase family. Class I subfamily. Homohexamer. Mg(2+) is required as a cofactor.

The protein localises to the cytoplasm. It carries out the reaction D-ribose 5-phosphate + ATP = 5-phospho-alpha-D-ribose 1-diphosphate + AMP + H(+). Its pathway is metabolic intermediate biosynthesis; 5-phospho-alpha-D-ribose 1-diphosphate biosynthesis; 5-phospho-alpha-D-ribose 1-diphosphate from D-ribose 5-phosphate (route I): step 1/1. In terms of biological role, involved in the biosynthesis of the central metabolite phospho-alpha-D-ribosyl-1-pyrophosphate (PRPP) via the transfer of pyrophosphoryl group from ATP to 1-hydroxyl of ribose-5-phosphate (Rib-5-P). In Mycobacterium bovis (strain ATCC BAA-935 / AF2122/97), this protein is Ribose-phosphate pyrophosphokinase.